A 432-amino-acid chain; its full sequence is Cysteine desulfurase, mitosomal (432 aa).

Residues Ala102–Thr103, Gln212, and Cys232–His234 each bind pyridoxal 5'-phosphate. Lys235 is subject to N6-(pyridoxal phosphate)lysine. Thr272 contributes to the pyridoxal 5'-phosphate binding site. Cys357 serves as the catalytic Cysteine persulfide intermediate. Cys357 provides a ligand contact to [2Fe-2S] cluster.

The protein belongs to the class-V pyridoxal-phosphate-dependent aminotransferase family. NifS/IscS subfamily. Requires pyridoxal 5'-phosphate as cofactor.

The protein localises to the mitosome. The enzyme catalyses (sulfur carrier)-H + L-cysteine = (sulfur carrier)-SH + L-alanine. Functionally, catalyzes the removal of elemental sulfur from cysteine to produce alanine. It supplies the inorganic sulfur for iron-sulfur (Fe-S) clusters in mitosomes. This Encephalitozoon cuniculi (strain GB-M1) (Microsporidian parasite) protein is Cysteine desulfurase, mitosomal.